The chain runs to 426 residues: Enolase (426 aa).

Gln163 lines the (2R)-2-phosphoglycerate pocket. Residue Glu205 is the Proton donor of the active site. Mg(2+)-binding residues include Asp242, Glu286, and Asp313. Positions 338, 367, 368, and 389 each coordinate (2R)-2-phosphoglycerate. Residue Lys338 is the Proton acceptor of the active site.

Belongs to the enolase family. The cofactor is Mg(2+).

It is found in the cytoplasm. It localises to the secreted. The protein resides in the cell surface. The enzyme catalyses (2R)-2-phosphoglycerate = phosphoenolpyruvate + H2O. It functions in the pathway carbohydrate degradation; glycolysis; pyruvate from D-glyceraldehyde 3-phosphate: step 4/5. Functionally, catalyzes the reversible conversion of 2-phosphoglycerate (2-PG) into phosphoenolpyruvate (PEP). It is essential for the degradation of carbohydrates via glycolysis. This Helicobacter pylori (strain J99 / ATCC 700824) (Campylobacter pylori J99) protein is Enolase.